Reading from the N-terminus, the 227-residue chain is PKHD-type hydroxylase CC_0027 (227 aa).

Residues 78-178 (TILSPMFNRY…RTASFFWIQS (101 aa)) form the Fe2OG dioxygenase domain. Fe cation contacts are provided by His-96, Asp-98, and His-159. Residue Arg-169 participates in 2-oxoglutarate binding.

Fe(2+) is required as a cofactor. L-ascorbate serves as cofactor.

The polypeptide is PKHD-type hydroxylase CC_0027 (Caulobacter vibrioides (strain ATCC 19089 / CIP 103742 / CB 15) (Caulobacter crescentus)).